A 223-amino-acid polypeptide reads, in one-letter code: Small ribosomal subunit protein uS3 (223 aa).

The KH type-2 domain occupies 39–107 (VREFLHKKLA…PVQINIEEVR (69 aa)).

The protein belongs to the universal ribosomal protein uS3 family. In terms of assembly, part of the 30S ribosomal subunit. Forms a tight complex with proteins S10 and S14.

In terms of biological role, binds the lower part of the 30S subunit head. Binds mRNA in the 70S ribosome, positioning it for translation. This Francisella tularensis subsp. novicida (strain U112) protein is Small ribosomal subunit protein uS3.